The primary structure comprises 186 residues: Ribosome-recycling factor (186 aa).

The tract at residues 135–164 (DGMDDLKKAEKDGEIGQDESRAQSERVQKM) is disordered.

This sequence belongs to the RRF family.

The protein resides in the cytoplasm. Responsible for the release of ribosomes from messenger RNA at the termination of protein biosynthesis. May increase the efficiency of translation by recycling ribosomes from one round of translation to another. In Sinorhizobium medicae (strain WSM419) (Ensifer medicae), this protein is Ribosome-recycling factor.